We begin with the raw amino-acid sequence, 560 residues long: Vesicular glutamate transporter 1 (560 aa).

Topologically, residues 1–63 (MEFRQEEFRK…CTCFGLPRRY (63 aa)) are cytoplasmic. The helical transmembrane segment at 64–84 (IIAIMSGLGFCISFGIRCNLG) threads the bilayer. Residues 85 to 116 (VAIVSMVNNSTTHRGGHVVMQKAQFNWDPETV) lie on the Extracellular side of the membrane. The chain crosses the membrane as a helical span at residues 117-137 (GLIHGSFFWGYIVTQIPGGFI). The Cytoplasmic portion of the chain corresponds to 138 to 140 (CQK). A helical membrane pass occupies residues 141–161 (FAANRVFGFAIVATSTLNMLI). Residues 162–169 (PSAARVHY) are Extracellular-facing. The helical transmembrane segment at 170–190 (GCVIFVRILQGLVEGVTYPAC) threads the bilayer. At 191-208 (HGIWSKWAPPLERSRLAT) the chain is on the cytoplasmic side. Residues 209 to 229 (TAFCGSYAGAVVAMPLAGVLV) traverse the membrane as a helical segment. The Extracellular segment spans residues 230-236 (QYSGWSS). Residues 237–257 (VFYVYGSFGIFWYLFWLLVSY) traverse the membrane as a helical segment. Over 258-302 (ESPALHPSISEEERKYIEDAIGESAKLMNPVTKFNTPWRRFFTSM) the chain is Cytoplasmic. The chain crosses the membrane as a helical span at residues 303 to 323 (PVYAIIVANFCRSWTFYLLLI). The Extracellular portion of the chain corresponds to 324 to 341 (SQPAYFEEVFGFEISKVG). A helical membrane pass occupies residues 342–362 (LVSALPHLVMTIIVPIGGQIA). Topologically, residues 363–378 (DFLRSRRIMSTTNVRK) are cytoplasmic. Residues 379–399 (LMNCGGFGMEATLLLVVGYSH) traverse the membrane as a helical segment. Residues 400-401 (SK) lie on the Extracellular side of the membrane. A helical membrane pass occupies residues 402–422 (GVAISFLVLAVGFSGFAISGF). Residues 423 to 435 (NVNHLDIAPRYAS) are Cytoplasmic-facing. A helical membrane pass occupies residues 436 to 456 (ILMGISNGVGTLSGMVCPIIV). Residues 457-469 (GAMTKHKTREEWQ) are Extracellular-facing. A helical transmembrane segment spans residues 470–490 (YVFLIASLVHYGGVIFYGVFA). The Cytoplasmic segment spans residues 491-560 (SGEKQPWAEP…PRPPPPVRDY (70 aa)). The segment at 497-560 (WAEPEEMSEE…PRPPPPVRDY (64 aa)) is disordered. The residue at position 504 (Ser-504) is a Phosphoserine. Residues 520 to 529 (DESEMEDEAE) show a composition bias toward acidic residues. 2 stretches are compositionally biased toward pro residues: residues 531–540 (PGAPPAPPPS) and 550–560 (PPRPPPPVRDY).

Belongs to the major facilitator superfamily. Sodium/anion cotransporter family. VGLUT subfamily. Interacts with SHANK3.

Its subcellular location is the cytoplasmic vesicle. It localises to the secretory vesicle. The protein resides in the synaptic vesicle membrane. The protein localises to the cell membrane. It is found in the synapse. Its subcellular location is the synaptosome. It catalyses the reaction L-glutamate(out) = L-glutamate(in). The catalysed reaction is chloride(in) = chloride(out). It carries out the reaction 3 Na(+)(out) + phosphate(out) = 3 Na(+)(in) + phosphate(in). The enzyme catalyses phosphate(in) = phosphate(out). It catalyses the reaction K(+)(in) + H(+)(out) = K(+)(out) + H(+)(in). Its activity is regulated as follows. Chloride channel activity is allosterically activated by lumenal H(+) and Cl(-) leading to synaptic vesicles acidification. The L-glutamate transport activity is allosterically activated by lumenal H(+) and Cl(-). The allosteric activation by H(+) efficiently prevents non-vesicular efflux across the plasma membrane, thereby restricting L-glutamate transport activity to acidic membranes such as synaptic vesicles. Multifunctional transporter that transports L-glutamate as well as multiple ions such as chloride, proton, potassium, sodium and phosphate. At the synaptic vesicle membrane, mainly functions as an uniporter which transports preferentially L-glutamate but also phosphate from the cytoplasm into synaptic vesicles at presynaptic nerve terminals of excitatory neural cells. The L-glutamate or phosphate uniporter activity is electrogenic and is driven by the proton electrochemical gradient, mainly by the electrical gradient established by the vacuolar H(+)-ATPase across the synaptic vesicle membrane. In addition, functions as a chloride channel that allows a chloride permeation through the synaptic vesicle membrane that affects the proton electrochemical gradient and promotes synaptic vesicles acidification. Moreover, may function as a K(+)/H(+) antiport allowing to maintain the electrical gradient and to decrease chemical gradient and therefore sustain vesicular glutamate uptake. The vesicular K(+)/H(+) antiport activity is electroneutral. At the plasma membrane, following exocytosis, functions as a symporter of Na(+) and phosphate from the extracellular space to the cytoplasm allowing synaptic phosphate homeostasis regulation. The symporter activity is driven by an inside negative membrane potential and is electrogenic. Is necessary for synaptic signaling of visual-evoked responses from photoreceptors. The polypeptide is Vesicular glutamate transporter 1 (Bos taurus (Bovine)).